Reading from the N-terminus, the 256-residue chain is Cilia- and flagella-associated protein 410 (256 aa).

3 LRR repeats span residues 19-40, 41-62, and 63-84; these read SVRK…QEMP, SLEV…SRCQ, and RLSE…FYLK. Residues 97-137 form the LRRCT domain; sequence NPCCGTSPHRYRMTVLRTLPRLQKLDNQAVTEEELSRALSE. Disordered regions lie at residues 129–156 and 168–212; these read EELS…GGPK and AETG…SSHR. A phosphoserine mark is found at Ser-136 and Ser-177.

As to quaternary structure, found in a complex with CFAP410, NEK1 and SPATA7. Interacts with NEK1. As to expression, widely expressed. Expressed in the retina.

The protein localises to the mitochondrion. The protein resides in the cytoplasm. Its subcellular location is the cytoskeleton. It localises to the cilium basal body. It is found in the cell projection. The protein localises to the cilium. The protein resides in the photoreceptor outer segment. Its function is as follows. Plays a role in cilia formation and/or maintenance. Plays a role in the regulation of cell morphology and cytoskeletal organization. Involved in DNA damage repair. In Homo sapiens (Human), this protein is Cilia- and flagella-associated protein 410.